The primary structure comprises 654 residues: Translation factor GUF1, mitochondrial (654 aa).

Residues Glu-57–Val-237 enclose the tr-type G domain. GTP-binding positions include Ala-66–Ser-73, Asp-130–His-134, and Asn-184–Asp-187.

This sequence belongs to the TRAFAC class translation factor GTPase superfamily. Classic translation factor GTPase family. LepA subfamily.

The protein localises to the mitochondrion inner membrane. It catalyses the reaction GTP + H2O = GDP + phosphate + H(+). In terms of biological role, promotes mitochondrial protein synthesis. May act as a fidelity factor of the translation reaction, by catalyzing a one-codon backward translocation of tRNAs on improperly translocated ribosomes. Binds to mitochondrial ribosomes in a GTP-dependent manner. The chain is Translation factor GUF1, mitochondrial from Candida albicans (strain SC5314 / ATCC MYA-2876) (Yeast).